Here is a 319-residue protein sequence, read N- to C-terminus: Alpha-hemolysin (319 aa).

Residues 1-26 (MKTRIVSSVTTTLLLGSILMNPVANA) form the signal peptide.

This sequence belongs to the aerolysin family. In terms of assembly, self-assembles to form first a non-lytic oligomeric intermediate and then, a mushroom-shaped homoheptamer structure of 100 Angstroms in length and up to 100 Angstroms in diameter.

The protein resides in the secreted. Its function is as follows. Alpha-toxin binds to the membrane of eukaryotic cells resulting in the release of low-molecular weight molecules and leading to an eventual osmotic lysis. Inhibits host neutrophil chemotaxis to the lesion region. Heptamer oligomerization and pore formation is required for lytic activity. This chain is Alpha-hemolysin (hly), found in Staphylococcus aureus (strain NCTC 8325 / PS 47).